The chain runs to 234 residues: tRNA (guanine-N(1)-)-methyltransferase (234 aa).

S-adenosyl-L-methionine is bound by residues G115 and 135–140; that span reads VGDYIL.

This sequence belongs to the RNA methyltransferase TrmD family. As to quaternary structure, homodimer.

The protein localises to the cytoplasm. It carries out the reaction guanosine(37) in tRNA + S-adenosyl-L-methionine = N(1)-methylguanosine(37) in tRNA + S-adenosyl-L-homocysteine + H(+). Functionally, specifically methylates guanosine-37 in various tRNAs. The polypeptide is tRNA (guanine-N(1)-)-methyltransferase (Rickettsia akari (strain Hartford)).